The primary structure comprises 362 residues: 3-dehydroquinate synthase (362 aa).

It belongs to the archaeal-type DHQ synthase family.

The enzyme catalyses 2-amino-2,3,7-trideoxy-D-lyxo-hept-6-ulosonate + NAD(+) + H2O = 3-dehydroquinate + NH4(+) + NADH + H(+). Its function is as follows. Catalyzes the oxidative deamination and cyclization of 2-amino-3,7-dideoxy-D-threo-hept-6-ulosonic acid (ADH) to yield 3-dehydroquinate (DHQ), which is fed into the canonical shikimic pathway of aromatic amino acid biosynthesis. The polypeptide is 3-dehydroquinate synthase (Methanothrix thermoacetophila (strain DSM 6194 / JCM 14653 / NBRC 101360 / PT) (Methanosaeta thermophila)).